A 408-amino-acid chain; its full sequence is Putative agmatinase 3 (408 aa).

The signal sequence occupies residues 1–21 (MKSVEWFTWGVFLLLSGFGEA). Mn(2+) is bound by residues His-198, Asp-222, His-224, Asp-226, Asp-319, and Asp-321.

This sequence belongs to the arginase family. Mn(2+) is required as a cofactor.

It catalyses the reaction agmatine + H2O = urea + putrescine. This Schizosaccharomyces pombe (strain 972 / ATCC 24843) (Fission yeast) protein is Putative agmatinase 3.